Reading from the N-terminus, the 234-residue chain is MSTNPAGGLLPLIRLLQLASPALPVGAYTYSQGLEWAVECGTVRTEADARRWIGDVLEWSLARFEAPLVARLLAAWADGDDAEVARLNEDFLASRETSELRAETVQMGYSLVRLLADLDAFAGLPGWKARLVALDTPAFPVAWTAAAAAWRIPADQALSAYLWAWLENQVMAAVKAVPLGQSAGQRLLADLGAAVPALVEAAQCLPEAEWSNFTPGLAIASSRHETQYTRLFRS.

Belongs to the UreF family. As to quaternary structure, ureD, UreF and UreG form a complex that acts as a GTP-hydrolysis-dependent molecular chaperone, activating the urease apoprotein by helping to assemble the nickel containing metallocenter of UreC. The UreE protein probably delivers the nickel.

The protein localises to the cytoplasm. Its function is as follows. Required for maturation of urease via the functional incorporation of the urease nickel metallocenter. The sequence is that of Urease accessory protein UreF from Azoarcus sp. (strain BH72).